Reading from the N-terminus, the 360-residue chain is Teichoic acids export ATP-binding protein TagH (360 aa).

The region spanning 24 to 245 (LKAMFFPKTR…YEDYINWFNK (222 aa)) is the ABC transporter domain. 59–66 (GINGSGKS) provides a ligand contact to ATP. Residues 246–360 (LSKEEKEAHK…GDIDNSDVSL (115 aa)) form a unknown region. Residues 270-290 (EEQENGKAGSGGDGTQPIVQP) are disordered.

Belongs to the ABC transporter superfamily. Teichoic acids exporter (TC 3.A.1.104.1) family. The complex is composed of two ATP-binding proteins (TagH) and two transmembrane proteins (TagG).

Its subcellular location is the cell membrane. The enzyme catalyses ATP + H2O + teichoic acidSide 1 = ADP + phosphate + teichoic acidSide 2.. Part of the ABC transporter complex TagGH involved in teichoic acids export. Responsible for energy coupling to the transport system. The sequence is that of Teichoic acids export ATP-binding protein TagH from Shouchella clausii (strain KSM-K16) (Alkalihalobacillus clausii).